The sequence spans 317 residues: Beta-ketoacyl-[acyl-carrier-protein] synthase III (317 aa).

Catalysis depends on residues Cys-112 and His-244. Residues 245 to 249 (QANLR) form an ACP-binding region. Residue Asn-274 is part of the active site.

The protein belongs to the thiolase-like superfamily. FabH family. As to quaternary structure, homodimer.

The protein resides in the cytoplasm. The catalysed reaction is malonyl-[ACP] + acetyl-CoA + H(+) = 3-oxobutanoyl-[ACP] + CO2 + CoA. The protein operates within lipid metabolism; fatty acid biosynthesis. Functionally, catalyzes the condensation reaction of fatty acid synthesis by the addition to an acyl acceptor of two carbons from malonyl-ACP. Catalyzes the first condensation reaction which initiates fatty acid synthesis and may therefore play a role in governing the total rate of fatty acid production. Possesses both acetoacetyl-ACP synthase and acetyl transacylase activities. Its substrate specificity determines the biosynthesis of branched-chain and/or straight-chain of fatty acids. The chain is Beta-ketoacyl-[acyl-carrier-protein] synthase III from Sodalis glossinidius (strain morsitans).